Reading from the N-terminus, the 686-residue chain is Rhophilin-2 (686 aa).

An REM-1 domain is found at 26 to 100; sequence NPLAQTGRSK…LEGLNISVGV (75 aa). The interaction with Rho stretch occupies residues 46–66; the sequence is QILKAMRMRTGAENLLKAATN. The BRO1 domain maps to 111–460; the sequence is PLIPLGLKET…QLKYTQLRED (350 aa). In terms of domain architecture, PDZ spans 515-593; that stretch reads RSIHFTAEEG…DDIEMKVVSL (79 aa). The residue at position 655 (Thr655) is a Phosphothreonine.

It belongs to the RHPN family. Interacts with GTP-bound RhoA and RhoB. Interacts with both GTP- and GDP-bound RhoA. Interacts with KRT18.

It is found in the cytoplasm. Its subcellular location is the perinuclear region. In terms of biological role, binds specifically to GTP-Rho. May function in a Rho pathway to limit stress fiber formation and/or increase the turnover of F-actin structures in the absence of high levels of RhoA activity. This is Rhophilin-2 (RHPN2) from Bos taurus (Bovine).